The primary structure comprises 215 residues: Glutathione S-transferase D6 (215 aa).

One can recognise a GST N-terminal domain in the interval 1-80 (MDLYNMSGSP…YLVEQYGKDD (80 aa)). Glutathione contacts are provided by residues serine 9, 50-52 (HTI), and 64-66 (ETR). The GST C-terminal domain occupies 86 to 206 (DPQKQALINQ…LARIQSAKKF (121 aa)).

Belongs to the GST superfamily. Delta family. Homodimer.

It catalyses the reaction RX + glutathione = an S-substituted glutathione + a halide anion + H(+). Functionally, conjugation of reduced glutathione to a wide number of exogenous and endogenous hydrophobic electrophiles. May be involved in detoxification. The chain is Glutathione S-transferase D6 from Drosophila melanogaster (Fruit fly).